Consider the following 93-residue polypeptide: U11-ctenitoxin-Pn1a (93 aa).

A signal peptide spans 1-21; that stretch reads MKCAVLFLSVIALVHIFVVEA. A propeptide spanning residues 22–34 is cleaved from the precursor; sequence EEEPDSDALVPQE. 5 cysteine pairs are disulfide-bonded: Cys-37–Cys-51, Cys-44–Cys-57, Cys-50–Cys-75, Cys-59–Cys-73, and Cys-83–Cys-90.

Belongs to the neurotoxin 09 (Tx3-6) family. In terms of tissue distribution, expressed by the venom gland.

It is found in the secreted. Probable neurotoxin. This chain is U11-ctenitoxin-Pn1a, found in Phoneutria nigriventer (Brazilian armed spider).